The following is a 110-amino-acid chain: Large ribosomal subunit protein P2 (110 aa).

The tract at residues 63 to 110 (ASVPSGGGVAAAAPAAGGGGADPAEAKEEKKEEPEEESDDDMGFGLFD) is disordered. Basic and acidic residues predominate over residues 86–95 (AEAKEEKKEE).

This sequence belongs to the eukaryotic ribosomal protein P1/P2 family. P1 and P2 exist as dimers at the large ribosomal subunit. Post-translationally, phosphorylated.

Plays an important role in the elongation step of protein synthesis. In Cryptochiton stelleri (Giant gumboot chiton), this protein is Large ribosomal subunit protein P2.